The primary structure comprises 254 residues: Putative ankyrin-containing lipoprotein Lxx09580 (254 aa).

An N-terminal signal peptide occupies residues 1-22 (MTEIRYVRLLTLVLASSVLLAG). Cys23 is lipidated: N-palmitoyl cysteine. A lipid anchor (S-diacylglycerol cysteine) is attached at Cys23. ANK repeat units follow at residues 56-85 (AATASLHAAARSGDAEAVRSALAAGAAIED), 89-118 (GGRTPLVEAAKGNHVEAARALIEAGADVNA), 122-151 (IQDSAYLYAGAEGYLEILRMTLTTGADVNA), 155-184 (FNGTALIPASEHAHTEVVRMLIAAGVDLDH), and 188-222 (PGWTAMQEAIVLGNGGAGAQDVVRQLLAAGANPDI).

The protein resides in the cell membrane. In Leifsonia xyli subsp. xyli (strain CTCB07), this protein is Putative ankyrin-containing lipoprotein Lxx09580.